Here is a 671-residue protein sequence, read N- to C-terminus: DNA ligase (671 aa).

Residues 32–36, 81–82, and E113 each bind NAD(+); these read DAEYD and SL. K115 serves as the catalytic N6-AMP-lysine intermediate. R136, E173, K290, and K314 together coordinate NAD(+). C408, C411, C426, and C432 together coordinate Zn(2+). Positions 593 to 671 constitute a BRCT domain; the sequence is EIDSPFAGKT…EAEMMRLLGE (79 aa).

It belongs to the NAD-dependent DNA ligase family. LigA subfamily. The cofactor is Mg(2+). Requires Mn(2+) as cofactor.

The enzyme catalyses NAD(+) + (deoxyribonucleotide)n-3'-hydroxyl + 5'-phospho-(deoxyribonucleotide)m = (deoxyribonucleotide)n+m + AMP + beta-nicotinamide D-nucleotide.. In terms of biological role, DNA ligase that catalyzes the formation of phosphodiester linkages between 5'-phosphoryl and 3'-hydroxyl groups in double-stranded DNA using NAD as a coenzyme and as the energy source for the reaction. It is essential for DNA replication and repair of damaged DNA. This chain is DNA ligase, found in Klebsiella pneumoniae subsp. pneumoniae (strain ATCC 700721 / MGH 78578).